The following is a 100-amino-acid chain: uncharacterized protein (100 aa).

The segment covering 65–91 (DDRERHLSATGERRREQGFGTSRRKDP) has biased composition (basic and acidic residues). The interval 65-100 (DDRERHLSATGERRREQGFGTSRRKDPSLYNWSDVK) is disordered.

It belongs to the chlamydial CPn_0121/CT_031/TC_0300 family.

This is an uncharacterized protein from Chlamydia trachomatis serovar D (strain ATCC VR-885 / DSM 19411 / UW-3/Cx).